The chain runs to 147 residues: uncharacterized protein (147 aa).

This is an uncharacterized protein from Bacillus subtilis (strain 168).